Here is a 170-residue protein sequence, read N- to C-terminus: RxLR effector protein PITG_07555 (170 aa).

An N-terminal signal peptide occupies residues 1–17 (MQAYHLLLVCMYISCSA). The short motif at 50-62 (RALRTHNPDREER) is the RxLR-dEER element.

The protein belongs to the RxLR effector family.

It is found in the secreted. It localises to the host cytoplasm. The protein resides in the host nucleus. Its function is as follows. Effector that enhances P.infestans colonization of Nicotiana benthamiana leaves. The sequence is that of RxLR effector protein PITG_07555 from Phytophthora infestans (strain T30-4) (Potato late blight agent).